The chain runs to 439 residues: Homogentisate 1,2-dioxygenase (439 aa).

Catalysis depends on histidine 293, which acts as the Proton acceptor. Residues histidine 336 and glutamate 342 each contribute to the Fe cation site. Homogentisate-binding residues include tyrosine 351 and histidine 372. Histidine 372 provides a ligand contact to Fe cation.

It belongs to the homogentisate dioxygenase family. Hexamer; dimer of trimers. Requires Fe cation as cofactor.

The enzyme catalyses homogentisate + O2 = 4-maleylacetoacetate + H(+). The protein operates within amino-acid degradation; L-phenylalanine degradation; acetoacetate and fumarate from L-phenylalanine: step 4/6. Involved in the catabolism of homogentisate (2,5-dihydroxyphenylacetate or 2,5-OH-PhAc), a central intermediate in the degradation of phenylalanine and tyrosine. Catalyzes the oxidative ring cleavage of the aromatic ring of homogentisate to yield maleylacetoacetate. This Cupriavidus necator (strain ATCC 17699 / DSM 428 / KCTC 22496 / NCIMB 10442 / H16 / Stanier 337) (Ralstonia eutropha) protein is Homogentisate 1,2-dioxygenase.